Reading from the N-terminus, the 223-residue chain is Putative PAN domain-containing protein R486 (223 aa).

A signal peptide spans 1 to 23; the sequence is MSQTAIIIWIVVIIILLVLGGLG. Residues 39 to 73 are disordered; the sequence is PTPINPPSSITPIQPINPPSSITPIQPSGPPSGGN. Over residues 45–64 the composition is skewed to low complexity; that stretch reads PSSITPIQPINPPSSITPIQ. 2 consecutive PAN domains span residues 80 to 155 and 159 to 223; these read CPAY…EDGC and ARYN…KMPH. 2 cysteine pairs are disulfide-bonded: Cys-80–Cys-155 and Cys-109–Cys-131. 3 N-linked (GlcNAc...) asparagine; by host glycosylation sites follow: Asn-162, Asn-189, and Asn-213. Cys-182 and Cys-204 are oxidised to a cystine.

It localises to the secreted. It is found in the virion. This Acanthamoeba polyphaga mimivirus (APMV) protein is Putative PAN domain-containing protein R486.